The following is an 867-amino-acid chain: Protein argonaute-3 (867 aa).

The segment at 1-83 (MSGRGNLLSL…IDTLKTDDHT (83 aa)) is necessary and sufficient for interaction with krimp. Residues 1–289 (MSGRGNLLSL…CDVSHRILCQ (289 aa)) are interaction with papi. Arg4, Arg68, and Arg70 each carry symmetric dimethylarginine. Positions 291-402 (TVLEMLVDLY…LIPELCYLTG (112 aa)) constitute a PAZ domain. One can recognise a Piwi domain in the interval 566–853 (MVVCICHNRR…LAYLIGQSIQ (288 aa)).

This sequence belongs to the argonaute family. Piwi subfamily. In terms of assembly, component of the ping-pong piRNA processing (4P) complex consisting of krimp, aub and AGO3. Interacts (via N-terminus when not methylated on arginine residues) with krimp (via non-canonical tudor domain); this interaction leads to symmetrical dimethylation on AGO3 arginine residues and its subsequent dissociation from krimp. Krimp associated AGO3 is mostly free of piRNA binding and the interaction plays an important role in the loading of AGO3 with piRNAs; piRNA binding may stimulate dissociation of the two proteins. May form part of a piRNA processing complex consisting of tud, aub and AGO3. Interacts (when symmetrically dimethylated on arginine residues) with tud. Forms a complex with smg, twin, aub, nos mRNA and piRNAs that target the nos 3'-untranslated region, in early embryos. Interacts (via the N-terminal region when symmetrically methylated on arginine residues) with papi (via C-terminus); this interaction is RNA-independent and may be required for AGO3 localization to the nuage. Interacts with TER94 and tral. In terms of processing, symmetrically dimethylated on Arg-4, Arg-68 and Arg-70, most likely by csul/PRMT5/DART5. Methylation state probably functions as an indicator of its piRNA binding state. In terms of tissue distribution, in ovary, expressed in germline stem cells, germline cyst cells, nurse cells and oocytes during early stages. Also found in the somatic cap cells of the germarium. In testis, expressed in germline stem cells, primary gonial cells and early spermatocytes. No expression detected in the somatic hub cells at the apical tip of the testis (at protein level). Expressed in neurons throughout the adult brain and in the mushroom body subdivision in the peduncle. In the mushroom body, expressed only in gamma and core alpha-beta neurons.

The protein resides in the cytoplasm. The protein localises to the perinuclear region. It localises to the cytoplasmic ribonucleoprotein granule. In terms of biological role, component of the perinuclear meiotic nuage, a germline-specific subcellular membraneless ribonucleoprotein compartment involved in production of transposable element-repressing Piwi-interacting RNA (piRNA)-induced silencing complexes (piRISCs), which are essential for maintaining germline integrity during oogenesis. Acts via the Piwi-interacting RNA (piRNA) metabolic process, which mediates the repression of transposable elements during meiosis by forming complexes composed of piRNAs and Piwi proteins and governs the methylation and subsequent repression of transposons. Piwi protein that directly binds piRNAs, a class of 24 to 30 nucleotide RNAs that are generated by a Dicer-independent mechanism and are primarily derived from transposons and other repeated sequence elements. Associates predominantly with sense piRNAs that contain adenine at nucleotide 10, but shows no preference for uridine at the 5' end. Shows RNA cleavage or slicer activity. Together with Piwi protein aub recruited to subregions of the perinuclear nuage by krimp, which coordinates their activity in the ping-pong amplification step of secondary piRNA biogenesis. Krimp recruits piRNA bound aub and unbound AGO3, bringing them into close proximity to facilitate the loading onto AGO3 of freshly cut piRNAs generated by aub cleavage of target sequences; krimp recognizes the piRNA loading state of the Piwi proteins via symmetrically dimethylated arginine modification in their N-terminus. Important for asymmetric ping-pong amplification to bias production towards antisense piRNAs capable of silencing transposable elements. In testis, associates with Su(Ste) and AT-chX-1 piRNAs mostly produced from antisense precursors. In the germline, acts to amplify pools of antisense piRNAs, among others Su(Ste), AT-chX-1 and roo, and to limit sense piRNA accumulation. Forms a complex with smg, twin, aub and specific piRNAs that targets nos mRNA (and probably other maternal mRNAS) for deadenylation promoting its decay during early embryogenesis. Involved in transposon silencing in the adult brain. The sequence is that of Protein argonaute-3 from Drosophila melanogaster (Fruit fly).